Consider the following 538-residue polypeptide: Chaperonin GroEL 2 (538 aa).

Residues 29-32 (TLGP), 86-90 (DGTTT), Gly412, 479-481 (NAA), and Asp495 contribute to the ATP site.

This sequence belongs to the chaperonin (HSP60) family. In terms of assembly, forms a cylinder of 14 subunits composed of two heptameric rings stacked back-to-back. Interacts with the co-chaperonin GroES.

The protein localises to the cytoplasm. It catalyses the reaction ATP + H2O + a folded polypeptide = ADP + phosphate + an unfolded polypeptide.. In terms of biological role, together with its co-chaperonin GroES, plays an essential role in assisting protein folding. The GroEL-GroES system forms a nano-cage that allows encapsulation of the non-native substrate proteins and provides a physical environment optimized to promote and accelerate protein folding. In Renibacterium salmoninarum (strain ATCC 33209 / DSM 20767 / JCM 11484 / NBRC 15589 / NCIMB 2235), this protein is Chaperonin GroEL 2.